The chain runs to 616 residues: Pyrophosphate--fructose 6-phosphate 1-phosphotransferase subunit alpha (616 aa).

This sequence belongs to the phosphofructokinase type A (PFKA) family. PPi-dependent PFK group II subfamily. Clade 'Long' sub-subfamily. Tetramer of two alpha (regulatory) and two beta (catalytic) chains.

It is found in the cytoplasm. Its pathway is carbohydrate degradation; glycolysis; D-glyceraldehyde 3-phosphate and glycerone phosphate from D-glucose: step 3/4. Its activity is regulated as follows. Allosterically activated by fructose 2,6-bisphosphate. In terms of biological role, regulatory subunit of pyrophosphate--fructose 6-phosphate 1-phosphotransferase. This is Pyrophosphate--fructose 6-phosphate 1-phosphotransferase subunit alpha from Solanum tuberosum (Potato).